A 2230-amino-acid polypeptide reads, in one-letter code: Probable serine/threonine-protein kinase DDB_G0267686 (2230 aa).

Residues 1–12 (MEPNNNISNSNN) show a composition bias toward low complexity. Disordered regions lie at residues 1–22 (MEPN…GDGK), 121–152 (NNNS…QLNN), 270–352 (DEKE…DKIS), 368–397 (PIIN…RLSS), 430–451 (NGAS…ILST), 464–574 (KNSS…NSPS), 593–620 (GSGS…NSST), 699–849 (QHQQ…LLPS), and 915–974 (SNQI…SSNS). Basic and acidic residues predominate over residues 270–336 (DEKENKEGGQ…NENEKNHNDK (67 aa)). Positions 337–346 (NDDDDDDEDN) are enriched in acidic residues. Low complexity-rich tracts occupy residues 375-388 (SSSN…NNSI), 430-447 (NGAS…GPTP), 473-574 (NNNN…NSPS), 593-602 (GSGSSSLGKG), 610-619 (SYSNNNNNSS), and 699-721 (QHQQ…QQQL). Over residues 722 to 731 (KSRSNTTNTP) the composition is skewed to polar residues. Positions 745–754 (NSPPVSPPSS) are enriched in pro residues. 2 stretches are compositionally biased toward low complexity: residues 755–766 (PMLSPLSSSPPS) and 783–818 (TGSL…RSNS). Polar residues predominate over residues 840 to 849 (YNTTPPLLPS). Residues 991–1119 (SLSALMKDRI…CILHSTTNGT (129 aa)) enclose the RGS domain. 8 disordered regions span residues 1146–1181 (SKET…INNN), 1220–1243 (KLSH…NQPL), 1300–1362 (LSPP…GDQT), 1506–1546 (QQQQ…QPQQ), 1563–1611 (PTIP…NNNS), 1725–1771 (VSNN…NNGN), 1802–1848 (NNLM…NNNH), and 1905–1929 (ENNT…TISQ). 2 stretches are compositionally biased toward low complexity: residues 1149–1181 (TSNS…INNN) and 1222–1239 (SHSN…SYTS). Over residues 1324-1353 (TNGSMKSSLFQQQLQPTGSINSSPINNHQV) the composition is skewed to polar residues. 2 stretches are compositionally biased toward low complexity: residues 1506–1520 (QQQQ…QFQP) and 1530–1546 (PSSN…QPQQ). Over residues 1726-1769 (SNNNNINSNNNNNNNNNNNNNNNNNNNNNNNNNNNNNNNSNNNN) the composition is skewed to low complexity. Positions 1905 to 1915 (ENNTTTTTTTT) are enriched in low complexity. The span at 1916 to 1929 (SNRPFRSNNPTISQ) shows a compositional bias: polar residues. Positions 1949–2208 (IVFLNKLGEG…SCPEILDSLL (260 aa)) constitute a Protein kinase domain. Residues 1955–1963 (LGEGTSAKV) and Lys-1976 each bind ATP. The active-site Proton acceptor is Asp-2069.

Belongs to the protein kinase superfamily. TKL Ser/Thr protein kinase family.

It catalyses the reaction L-seryl-[protein] + ATP = O-phospho-L-seryl-[protein] + ADP + H(+). It carries out the reaction L-threonyl-[protein] + ATP = O-phospho-L-threonyl-[protein] + ADP + H(+). This Dictyostelium discoideum (Social amoeba) protein is Probable serine/threonine-protein kinase DDB_G0267686.